A 326-amino-acid chain; its full sequence is Type II methyltransferase M.CviAII (326 aa).

The protein belongs to the N(4)/N(6)-methyltransferase family.

It catalyses the reaction a 2'-deoxyadenosine in DNA + S-adenosyl-L-methionine = an N(6)-methyl-2'-deoxyadenosine in DNA + S-adenosyl-L-homocysteine + H(+). Functionally, an alpha subtype methylase that recognizes the double-stranded sequence 5'-CATG-3', methylates A-2 on both strands and protects the DNA from cleavage by the CviAII endonuclease. In Paramecium bursaria Chlorella virus 1 (PBCV-1), this protein is Type II methyltransferase M.CviAII (CVIAIIM).